Reading from the N-terminus, the 167-residue chain is Urease accessory protein UreE (167 aa).

It belongs to the UreE family.

Its subcellular location is the cytoplasm. Involved in urease metallocenter assembly. Binds nickel. Probably functions as a nickel donor during metallocenter assembly. This is Urease accessory protein UreE from Pseudomonas aeruginosa (strain LESB58).